We begin with the raw amino-acid sequence, 214 residues long: CASP-like protein 3A1 (214 aa).

At 1–49 the chain is on the cytoplasmic side; it reads MTNGQKIEVAVQLPESKVAATENNETMSGPLVVGGGVAKPFGRKADVMH. A helical membrane pass occupies residues 50–70; that stretch reads VILRLLCTITSVTAVSFMVTA. Residues 71 to 96 are Extracellular-facing; sequence HQSSTVSIYGFMLPVRSKWSFSHSFE. The helical transmembrane segment at 97 to 117 threads the bilayer; the sequence is YLVGVSAAVAAHSLLQLLISM. Over 118–132 the chain is Cytoplasmic; the sequence is SRLLRKSPVIPSRSH. The chain crosses the membrane as a helical span at residues 133-153; the sequence is AWLIFAGDQVFAYAMISAGAA. The Extracellular portion of the chain corresponds to 154–182; that stretch reads ASGVTNLNRTGIQHTALPNFCKPLNYFCN. Asn161 carries N-linked (GlcNAc...) asparagine glycosylation. A helical transmembrane segment spans residues 183-203; that stretch reads HVAVSIAFAFISCLLLAALAV. The Cytoplasmic portion of the chain corresponds to 204–214; sequence QEVIWLSKSKY.

The protein belongs to the Casparian strip membrane proteins (CASP) family. Homodimer and heterodimers.

The protein resides in the cell membrane. This Ricinus communis (Castor bean) protein is CASP-like protein 3A1.